Reading from the N-terminus, the 671-residue chain is DNA ligase (671 aa).

NAD(+)-binding positions include 34 to 38 (DAEYD), 83 to 84 (SL), and Glu115. Catalysis depends on Lys117, which acts as the N6-AMP-lysine intermediate. The NAD(+) site is built by Arg138, Glu174, Lys291, and Lys315. Cys409, Cys412, Cys427, and Cys432 together coordinate Zn(2+). In terms of domain architecture, BRCT spans 589 to 671 (RSGGPLTGKS…LQMIDTLEEA (83 aa)).

This sequence belongs to the NAD-dependent DNA ligase family. LigA subfamily. Mg(2+) serves as cofactor. It depends on Mn(2+) as a cofactor.

It carries out the reaction NAD(+) + (deoxyribonucleotide)n-3'-hydroxyl + 5'-phospho-(deoxyribonucleotide)m = (deoxyribonucleotide)n+m + AMP + beta-nicotinamide D-nucleotide.. DNA ligase that catalyzes the formation of phosphodiester linkages between 5'-phosphoryl and 3'-hydroxyl groups in double-stranded DNA using NAD as a coenzyme and as the energy source for the reaction. It is essential for DNA replication and repair of damaged DNA. This is DNA ligase from Syntrophotalea carbinolica (strain DSM 2380 / NBRC 103641 / GraBd1) (Pelobacter carbinolicus).